Consider the following 69-residue polypeptide: uncharacterized protein (69 aa).

One can recognise a CHCH domain in the interval 6–56; the sequence is SEECTPAKKKYDACFNDWYANKFLKGDLHNRDCDELFAEYKSCLLKALKTK. Short sequence motifs (cx9C motif) lie at residues 9–19 and 38–48; these read CTPAKKKYDAC and CDELFAEYKSC. 2 disulfides stabilise this stretch: cysteine 9–cysteine 48 and cysteine 19–cysteine 38.

It belongs to the TRIAP1/MDM35 family.

This is an uncharacterized protein from Schizosaccharomyces pombe (strain 972 / ATCC 24843) (Fission yeast).